Here is a 402-residue protein sequence, read N- to C-terminus: N-acetyllactosaminide beta-1,6-N-acetylglucosaminyl-transferase (402 aa).

Residues 1–7 are Cytoplasmic-facing; sequence MMGSWKH. The chain crosses the membrane as a helical; Signal-anchor for type II membrane protein span at residues 8 to 23; it reads CLFSASLISALIFVFV. Residues 24–400 are Lumenal-facing; the sequence is YNTELWENKR…QSETAIQPSW (377 aa). N-linked (GlcNAc...) asparagine glycosylation is present at Asn41.

The protein belongs to the glycosyltransferase 14 family. Expressed in lens epithelium cells. In terms of tissue distribution, expressed in reticulocytes.

The protein resides in the golgi apparatus membrane. The catalysed reaction is a beta-D-Gal-(1-&gt;4)-beta-D-GlcNAc-(1-&gt;3)-beta-D-Gal-(1-&gt;4)-beta-D-GlcNAc derivative + UDP-N-acetyl-alpha-D-glucosamine = a beta-D-Gal-(1-&gt;4)-beta-D-GlcNAc-(1-&gt;3)-[beta-D-GlcNAc-(1-&gt;6)]-beta-D-Gal-(1-&gt;4)-N-acetyl-beta-D-glucosaminyl derivative + UDP + H(+). It participates in protein modification; protein glycosylation. Branching enzyme that converts linear into branched poly-N-acetyllactosaminoglycans. Introduces the blood group I antigen during embryonic development. It is closely associated with the development and maturation of erythroid cells. In terms of biological role, determines the expression of the blood group I antigen in erythrocytes. This Homo sapiens (Human) protein is N-acetyllactosaminide beta-1,6-N-acetylglucosaminyl-transferase (GCNT2).